The following is a 7260-amino-acid chain: MHRTNEMERKRVFTEICAEALKVEIDDLDETRSWVALGGDSMATIRLIARCEERGMRAKTADVIRCASITELFETIQYLQPSESIDREEVKPEDADAAPFSLWPEYHNATTTEEKQKLLNEVARHCNSTPNDIEDVYPSTPLQEGLMAITSRSPAAYVDRRAFTLPPTVDIARFRAALEALTARTHILRTRIIIDPLSGRSLQVVTRNEVVWREAMTLNDYLEDDRQEGIALGQPLSRCGLIQDKGSDGVEETVFVWTVHHSIYDGWSALQLYRQLAAIYNSEQLSPVVPYTRFVRYLQQQDPDSATQYWRDQLQGEDIMVDWPTLPTATYQPRPRTQFQANILLPDVSGSGLVMMSAVLRGAWALVMAQYSGYSDVIFGVTLSGRNAPVPQVADITAPLITTVPVRIRVDQKLTVAEFLDRIQTQATEMIEYEHTGLQQIMTFLPEYASALDFRNLLIIQPAVERDAYRAFPGISPINIPVEDFDSYGLNVECTLGREQIDIQLNYDEGVITTAALTNVMEQFSTLVRKMCRPDAQATSINEILTLPAQDAEQIKKWNADVPSPVHRCIHDLVQDQVRSQPAAIAVDAWDGRFTYAELASQSMRLAQHLTISHGVGPEQTIGLCMDKSRWAVVAMLAILYAGGAVLPLSGSHPLPRLQGIVEDANTRVILVDASQAARLVGMGRPLVIVDSTIVENLSPAQNEMRSGVTPSNMAWVVYTSGSTGMPKGVVLEHQSLCTSLTAHAKAIGITEHTRTLQFAAYTFDVSIMDTFSTLQAGGCVCVPSEEERLNRLAEAAARLEVNYAELTSTVTEMLSPSQVPSLTTLLLSGEPLKPAVLSIWAKHARVFNSYGPTECSITASNSRQLFHPDEARNIGAPMESLFWVVQSDNHQALCPIGTPGELLIEGPLLARGYLNDETTTNDSFITEPRFPEQIGLERTGRRMYRTGDLVQQNRDGSLLYVGRCGGQQVKIRGQRVDVSEVEHQITQRLPGVKTVAVELVGQGSQLSLMAVIEFAGGTSVTAAPVFEALREQLLHALPQYMVPTLYMPTDQMPINASGKLDRRGLRAQLQALTIAELQEYALNAGPKSAPSTAIEHKLQVLWAETLKVDPACIGREDSFVLLGGDSIAAMRMASLPAAQELHLSVADIFQHARLSDLARELEGRNLNENMQEADPAPFALWDTKQNQRAQRVAILAAQCGVTAGEVEDIIPCTAMQEGLMALTTHQPTAYVGRQVYRLAASIDTQRFQEAWKTLVYHTPILRTRLAVDEASDPQTGGLVQIVVGDGLTWKYSTDLDEYLACDEAEGMALGQPLVRLALVQQKEERFFIFTGHHSVYDGWSASLMFQRLAEIYLHNRIHSSPVPYSRFIRHLLKQDPVSTAGYWSTQLEGEAVVDWPPLPRADYQPRPMHRATHTITLPDNAKISTRGLSKLPHTLRAAWALVMATYAGGQGNRVVFGATVSGRNAPIRGITEMVGPTITTVPVAVQLDTQQTVSQFLEAVQKQAADMIPFEQTGLQIIRKLVPASCHATLELRNLFLVQPLPDGEETDLPGLASLPVTLEGFDTYGLTVQCSLGPDAVTVEMRYDENVIASARVKRIMNCFDHVVNQLYSKRNGAVPLGDLSLLSADDSTTIARWNQTSPERIERCIHHLIEEQITARPDSQAICAWDGDLTYAELNTQATQLSWYLRGLKVDAERMVGICMDKSKFAGVAMLAVLQAGGVVVPLGVNHPPSRNEGIVEDTAIDIILVDEQQRDRLSTMPNVQLVVIEQSLLDTLTIQPIERELPVNVTPNNAAWVIYTSGSTGKPKGVVLQHRALCSSIRAHGARFKMGPHTRMLQFAAHTFDACIQDYFTTLAFGGVVCVPSEHERMSDLSTAVRKLGVTFATLTSTVARLIDPNDVSAMQQLALVGEPVKADVVKRWLDHVTVLNAYGPSECSIHSTCSEPLTDPKQSAIIGTGMGSRVWVADVRDYNRLCPIGVPGELLIEGPILAREYLNDPQKTEKAFITNPAFLEELGISCNSNEGRMYRTGDLVRLDEHGSLTHLGRRDTQIKIRGQRVEVGEIEYQITQQLAGVRSAAVELLEDAGKVRLTVALDFALDSDLRRGPASELGVLLPSPALTTGLQRLRGSLFQVLPIYMVPTAFLPIMDMPLNASGKLDRRAVRALLEKVSFEEQRQYLAVSASESTVTPSTPTESQLRAVWADMLQLPVTQVNIHDNFFQLGGDSVVAMRMVATESARALKLTVADIFQSPRLTDLANLLSSRFLKEEQDEEEYMAEDDPEPFSLWYANEDLQRRHEQLQQIAQDCDVRVSSIQDVYPCTPLQEAMMAITSRQSAAYINRQVFELDDSIDVDRLQSAWRKLAQAVPTLRTRIAMSPGKASTLVQVVVDEEIEWQVSGSLEGYLERDQEQGMALGTPLIRFGLIHKDVSGQRFLVWTAHHSLYDGWSSRLIYQHLADIYHAGRVLDSPASFPRFIRFLAEQDNAEVRSASAKYWSEELEGEVMSNWPPLPHVDYQPRPGREIIKVVPLRQSGPSQVITPANVVRAAWAITMAQYAGHDDVVFAATVSGRNAPVWQVGNIVAPTITTVPVRTHIDWTDNITSFLDTIQKQAADMIPYEHTGLRTIKAIIPPQLGPALDLRNVLVVQTEGEGKTGAAPFPGVEPFSLGAAVDFDSHGLTVDCTVSATNLRVAFRFDETVLPTTHAENILSHFTHVVQQLCDPLLVKGRTLGDMDLVSPGDRTCIFERNDTVDISRWDACIHDLVGKQALAQPNAPAVCAWDGDLSYKELASYASRLAHQLIALGVGPEKKVGLCLDKSRWAVVAMLATLQAGGAIVPLGVSHPFSRVEVMVEDSAAVVILVDEQQHHRLADLPSNIPRVIVDSQSLEKLPPQSAPVTEVSPDNAAWINYTSGSTGAPKGMILEHGGLCTSMRTQSARMHISNKTRALQFSPFTFDVSISDISATLIYGGCVCLPSESDRMNNLAGSIQTMAVNFASLTPTVARLLSPAEVPTLKTLALTGEALKPDVVALWKIVPDVALYNTYGPSEGSVCTCNGPISSPEEAESIGTPMATRHWVTQPHNYHQLSPIGAPGELLIEGPLIARGYLNNPEKTAASFVPPPGFLTKPSGSRIYRTGDLVRQNTDGSFTYLGRRDTQVKIRGQRVEIGEIEHQIVNHLASVQTAVVHLLEAIGLVAVVELREAETVAEIEPAGTIAPSPALCSQFSDLRQALLRVLPDYMAPALFVPVPSIPTNVSGKLDRRAVHELLMSLPTDNLGRWTAEQENMPKAILQPATEMEKMLQELWARMLKIPADNVSPQDDFFRLGGDSVTAMRMVATATRTSRHLRLVVTDIFQHPRLSELAQVLEERVQKDLEQRDIQSTEPIDPEPFALFADGSDLDAQGREQRLAAVAEQCSVAVEQVQDVYPCTPLQEGLLANTSRQQAAYVSRQSYVLSNNIDLARFKAAWEALAKAAPILRTRIVIGAEGSCQVVVKGPIEWLHHSGALEDYIQQDKAREMGLGQPLARYAIVQELSGEQFFVWTAHHSMYDGWTVRLLCQELINLYNREDHVPRPVPYTRFIRYLYEINRAGSLEFWKQQLEGDDVEADWPRLPHVGYEPRPRSTLSVNIADPGNDESSGIVIANILRAAWGLVMAQFSGHNDIVYAANVSGRTAPVPGVTDIIGPTIATVPVRMHFNPRALMTVESFLHGVQTQSQQMIDHEQTGLIAMRNHPNLQLRNLLVIQPADEGDTVLDFPGIEAVPSAVEDFDSYGVNIECVLGMTIRVQARFDDHIVAATYMKRVLDQFAYIVEQLCDPRLRALPLQQLNLLSPNDQQQISSWNAAAPESVEQCVHEMVEEQAMAHPTKLAVWAWDGKFTYQELAHLAQLLADQLVSLGIGPERMVGVCMDKSKWAAVAFLAILKAGGVVVPLGVSHPIRRIETILNDTMSDLVLVDAKHCQRLSVEGLLRQRLLVVDDKLQQHGSSRPRAGQQAKPITPDHAAWVIYTSGTTGLPKGAVLDHRALSSSIRAHGTRYKFGPQTRKLQYSAHLFDGTIEDYFTTLSWGGLCCVPSEDDRLDMRRLTAFMRETEVNALATTYTVAGLLTPEEVPSLQTLVLGGEPATVEVTDTWRSKVDLFNCYGPSECTVFSSAAGPRVAVAELHNIGHPIGTRLWVVNPDNPGSLCPVGAPGELLIEGPQLARGYLNDEAKTRTAFLTDLEFMRQFKIPPSTRVYRSGDIVRQKDDGSFVYVARRNTMQVKIRGQRVEVGEIEHQVGLHLAETRAVAVELLKQGVHGLPVLVAVVDFADNSQYRLADGDQKPTPKEELLPPTPAAQQAFTKLQVALSQVLPSHMIPSIYLPVTQLPRNISGKLDRRALRELLDQLSYEAIHQYMDIDGGEKAAPATAMERTLQSLWAQTLGMDIDRIGAHDNFFQLGGDSVAAMRLAAIVQQQEQLQLTVGDILSHPCLSDLANLLADGAPTEGTTETDPEPFSLWCTVPDEDLPTIAVKLGVAVEQIEDIYPATPLQEGFIAVTARQSAAYISRQVYKLSATLLDLDRFKASWETLVNTTPILRTRLSIGRDGHAVQVVVRDSIGWRYGTDLSSYVAQDREEGMRLDEPLMRYAIITEPTSGSCYFVWTAHHSIYDAWTIRAISKSLAEIYTSTSPHSIPQPTASFSRFIRYLTNTDTDAIKDFWHEQLAGDVVADWPPLPQNDYQSLPRGRIQKTIKIPERSSGILESTTLRGAWSIVMSQYAGSSDVVFAATVSGRNAPVPQINDIAGPTLTTVPVRVSVDSSLSVNQFLQSIQQQSTDMIPYEQTGLQRIKASLPEANQSALNLRNLLVIQLAAEAESNTLALPGWEAQPAPFEDFGSFGLQIECTPIPGSHAIDVNIQYDEKVISTTAVTRVAEHFVHVAEQLFNPGLINSALTEIQLQLSSEHKDVMLRQNTHVPPYLNRCIQEMVYERAALQPNAPAICAWDGNWTYAEVTDLAASFASYLSTELQIGPTQMVGVCMDKSKWAVVAMLAILCAGGTVVPLGVNHPLSRIQVMAQDTGLGVILVDNKQRERLFDLNHRLITVDAQHIQGLPVLGKQERTSMTQKTGVTPDDIAWIIYTSGSTGIPKGVMLEHRALATSMEAHGSTFGFGTHTRILQFAAHTFDATIQDMFTTLYKGGCVCIPSEYDRVNRLTESMASMSVNCATLTSTVASLLAPEELPSMQTIILVGEPVTPAAVALWLPHATVLNAYGPSECSIHSSCSDPITDPALAPNIGRPLATNFWVVDPNNYHSLRPIGAPGELLIEGPIQARGYLNDIDKTNAAFVIDPDFMKQLGLSGSQRRLYRTGDLVRQNDNGTLTHMGRRDLQVKIRGQRVEVGEVEYQIQRKLPSARTVAVEPLQHGDKDKHITLIAIMDLSDRAVTDELNAAKAPEPLPVTASLQATFHDLRNSLLQVLPAYMVPAAYLPVDRMPMNASNKLDRRAIRELITHHSLEDLQQYLGGGTDDNVKTAPRTVMEQQVHALWVEVLGLSEDAVGVYDNFLQLGGDSLTAMRIVAAAGQTGEVRVSVEDIFMHPTVADLALVLSERGSSDRAVEQEQEDPAPYQLWTEQNNFPADQIEENLEAIAAQCAVDRALIEDVYPCTPLQAGLMAITARQPAAYVSRQVYTMSSSIVDRATFQKAWQQLAAGTDILRTRIVMAPDSSSQALQVVVRDTIHWELGTNLDEYLRRDSERGMALGEPLVRYGIVEEPSGKSYFIWTAHHALYDGWTLGALSKRLGDIYQNRALSTQSVPYSRFIRYLQHGRSSLESSASYWREQLQGDAMANWPRRPALDYQPMPRHNLQRTISLGSSQTLVTTSTILRAAWALVIAQYAGHNDVVFAATVSGRSAPVAGIADIPAPTITTVPVRIRVDGNRSVADYLQAVQRQAIDMIYYEHTGLQTIKALVPDLASTLDAGSLMVIQPTDQSAMESGLDFPGLDMVPMPIAPFNSHGVTLECKLGAQDVTLDIHYDSNIIAPEQLSLVIDYFASLVLRLGNPAATSSPVADLLAVSEKDERQIRAWNSTVPPRLDKCIHEMVQEQVARTPGEIAIQAWDGQLTYREFHDLAASLAHHLAALGVGPETLVGVCMAKSKWGAVAMLAIMQAGGAIMPLGVSQPVARIQNILETSQAAFILVDEEQMDRLNQLSTPGQTPKLIFVEDLLMEIPSYTQPPATDVTPDNASWAIFTSGSTGTPKGVIIEHGTMSTSLDEQGRWLGLSQETRFLQFASYTFDNVITDTFATTSFGGCVCIPSESGRMDRLEEVMVEMKVNTAMLTSTVAQQLSPTQLPLMQKLILTGEPVRPDVVRTWLDHAEIYNAYGPTEGSMSTCTRPYTNAFEASNIGHPLATRLWVVQPDNPHLLSAIGAPGELYIEGPFLARGYLNDPVKTDALFLMDPPFTQRLGLTGRRVYRTGDLVQQNEDGTLIHLGRHDSQVKIRGQRVEISEIEHQITQHLPEASTVAVFILDDNPITLVAAVEFNMKSPHRLGPHSAFKGLLAPTVAMRVDFTRLYGALSQVLPIYMVPTVFIPMHEMSRNLSGKLDRRLVQTLLKEIPTTELRRYRLGEGPKIAPSTAMERQLQSIWSKALDLPEDQVGAHDNFFHIGGDSLVAMRIIAIARAQKLKLTVADLFKYPCLSEVAQVVEDRVAASSITLAVDEEPIAPSPFSLIAAENIEIYLQRIASRMPGCRAQDIVDILPTTDFQALTVAEALTTPGTANFAHFFLDGDGSCDVEALRKSCLQLIEAMPELRTAYVFDQGRLLQVVLRVYEPEIKILQTNDATMEEVTSDLISKQMFQAPHLGQPFTVITIIEESASSRHRVVLRLTHAEYDAVSMQSIWRQLRALYEGTTLKPRPTFASFLYSQRQKITTQTYNYWRTLLDESTMTPLSTPTPMPTSTIGHYPSKVAQLRPCRVHINRSSVEGITSAVFIKTAWAIALSRLSNRQDIIFADTVSSRGTVDESLMEATGCCVTLLPVRVKLTPETSMQDVLLELRTQQVQSLERAQLGFREILHECTNWPTSTRFTSAINCISQGGNGAFTMRGTNYWLSNFQANNATWTVDLGVTAVMHDNGDVDLRMAYLPTRISEDAAYKYLNTLQDTLQAILDSPGLLVSNFLSRALGGSLGDRKGASDPKIEVIEPEQEPQPLESTDKMTYLDLKKTPEWEEVLRGRRGIVSPGRTSLSFSQRGGDLLDALYLSSLQKDADGGRYISPMALLEGSRCEEAEKSASVTSSERRLATI.

In terms of domain architecture, Carrier 1 spans 4 to 80 (TNEMERKRVF…ELFETIQYLQ (77 aa)). Serine 41 bears the O-(pantetheine 4'-phosphoryl)serine mark. Residues 134 to 549 (EDVYPSTPLQ…SINEILTLPA (416 aa)) form a condensation 1 region. Residues 575–965 (QDQVRSQPAA…DGSLLYVGRC (391 aa)) are adenylation 1. Residues 1090 to 1166 (APSTAIEHKL…DLARELEGRN (77 aa)) enclose the Carrier 2 domain. An O-(pantetheine 4'-phosphoryl)serine modification is found at serine 1127. Positions 1208–1628 (EDIIPCTAMQ…LGDLSLLSAD (421 aa)) are condensation 2. Residues 1653-2054 (EEQITARPDS…GRRDTQIKIR (402 aa)) are adenylation 2. A Carrier 3 domain is found at 2188 to 2264 (TPSTPTESQL…DLANLLSSRF (77 aa)). Residue serine 2225 is modified to O-(pantetheine 4'-phosphoryl)serine. The interval 2314–2719 (QDVYPCTPLQ…THVVQQLCDP (406 aa)) is condensation 3. The interval 2763 to 3156 (KQALAQPNAP…GRRDTQVKIR (394 aa)) is adenylation 3. One can recognise a Carrier 4 domain in the interval 3287–3365 (QPATEMEKML…ELAQVLEERV (79 aa)). Serine 3324 carries the O-(pantetheine 4'-phosphoryl)serine modification. The tract at residues 3417-3831 (VQDVYPCTPL…LLSPNDQQQI (415 aa)) is condensation 4. The interval 3851–4248 (EEQAMAHPTK…SFVYVARRNT (398 aa)) is adenylation 4. In terms of domain architecture, Carrier 5 spans 4394-4471 (APATAMERTL…DLANLLADGA (78 aa)). Serine 4431 carries the post-translational modification O-(pantetheine 4'-phosphoryl)serine. The tract at residues 4510–4910 (EDIYPATPLQ…HFVHVAEQLF (401 aa)) is condensation 5. The tract at residues 4955 to 5357 (ERAALQPNAP…GRRDLQVKIR (403 aa)) is adenylation 5. The Carrier 6 domain occupies 5496 to 5573 (APRTVMEQQV…DLALVLSERG (78 aa)). Position 5533 is an O-(pantetheine 4'-phosphoryl)serine (serine 5533). A condensation 6 region spans residues 5622 to 6043 (EDVYPCTPLQ…AVSEKDERQI (422 aa)). Residues 6063–6460 (QEQVARTPGE…GRHDSQVKIR (398 aa)) are adenylation 6. One can recognise a Carrier 7 domain in the interval 6592–6668 (APSTAMERQL…EVAQVVEDRV (77 aa)). Serine 6629 is modified (O-(pantetheine 4'-phosphoryl)serine). The condensation 7 stretch occupies residues 6718 to 7133 (LPTTDFQALT…ILDSPGLLVS (416 aa)). Residues 7241-7260 (CEEAEKSASVTSSERRLATI) are disordered.

It belongs to the NRP synthetase family.

Its pathway is antifungal biosynthesis. Nonribosomal peptide synthetase; part of the gene cluster that mediates the biosynthesis of echinocandin B, a fungal lipidated cyclic hexapeptide that acts as an antifungal agent. Linoleoyl-AMP, produced by the fatty-acyl-AMP ligase ecdI, is transferred to the initiation carrier domain (T0) of ecdA. The linoleoyl-S-phosphopantetheinyl-T0 is sequentially extended with L-ornithine, L-threonine, L-proline, L-homotyrosine, L-threonine, and 4R-methyl-L-proline to form the linear hexapeptide. Thereafter, the terminal condensation (C7) performs macrocyclization of the NRPS product and the cyclic scaffold is released from ecdA. All six of the amino acid residues are hydroxylated, including 4R,5R-dihydroxy-L-ornithine, 4R-hydroxyl-L-proline, 3S,4S-dihydroxy-L-homotyrosine, and 3S-hydroxyl-4S-methyl-L-prolin. In the pathway, all the hydroxylation reactions are proposed to occur following completion of the cyclic peptide, so the unhydroxylated precursor produced by ecdA will undergo six rounds of hydroxylation. Five hydroxylase genes (ecdG, ecdH, ecdK, htyE and htyF) are embedded within the echinocandin B (ecd) and L-homotyrosine (hty) clusters. This chain is Nonribosomal peptide synthetase ecdA, found in Aspergillus rugulosus (Emericella rugulosa).